A 216-amino-acid chain; its full sequence is Large ribosomal subunit protein bL25 (216 aa).

Disordered stretches follow at residues 1-21 (MAET…GAVR) and 192-216 (SADN…GKED). Residues 195 to 216 (NEAKTEEAGEDKSEEKSSGKED) show a composition bias toward basic and acidic residues.

It belongs to the bacterial ribosomal protein bL25 family. CTC subfamily. As to quaternary structure, part of the 50S ribosomal subunit; part of the 5S rRNA/L5/L18/L25 subcomplex. Contacts the 5S rRNA. Binds to the 5S rRNA independently of L5 and L18.

In terms of biological role, this is one of the proteins that binds to the 5S RNA in the ribosome where it forms part of the central protuberance. The sequence is that of Large ribosomal subunit protein bL25 from Parvibaculum lavamentivorans (strain DS-1 / DSM 13023 / NCIMB 13966).